Consider the following 843-residue polypeptide: Translation initiation factor IF-2 (843 aa).

Residues 198-219 (YKREEEEKKSKAKKAGGKGFKK) form a disordered region. Over residues 207 to 219 (SKAKKAGGKGFKK) the composition is skewed to basic residues. Residues 345 to 512 (SRAPVVTIMG…AVLLQSEVLE (168 aa)) form the tr-type G domain. The G1 stretch occupies residues 354-361 (GHVDHGKT). Residue 354–361 (GHVDHGKT) participates in GTP binding. The interval 379–383 (GITQH) is G2. A G3 region spans residues 400–403 (DTPG). GTP-binding positions include 400–404 (DTPGH) and 454–457 (NKID). The interval 454–457 (NKID) is G4. The tract at residues 490–492 (SAK) is G5.

It belongs to the TRAFAC class translation factor GTPase superfamily. Classic translation factor GTPase family. IF-2 subfamily.

Its subcellular location is the cytoplasm. One of the essential components for the initiation of protein synthesis. Protects formylmethionyl-tRNA from spontaneous hydrolysis and promotes its binding to the 30S ribosomal subunits. Also involved in the hydrolysis of GTP during the formation of the 70S ribosomal complex. This is Translation initiation factor IF-2 from Francisella tularensis subsp. tularensis (strain WY96-3418).